Consider the following 143-residue polypeptide: Transcriptional regulator MraZ (143 aa).

SpoVT-AbrB domains are found at residues 5-47 and 76-119; these read TFTP…PKAE and ADEQ…DAES.

The protein belongs to the MraZ family. In terms of assembly, forms oligomers.

It localises to the cytoplasm. The protein resides in the nucleoid. The sequence is that of Transcriptional regulator MraZ from Corynebacterium jeikeium (strain K411).